The chain runs to 429 residues: Trigger factor (429 aa).

Residues 164 to 249 form the PPIase FKBP-type domain; it reads GDWAVIDHEG…LKALKVRQAP (86 aa).

This sequence belongs to the FKBP-type PPIase family. Tig subfamily.

The protein resides in the cytoplasm. The catalysed reaction is [protein]-peptidylproline (omega=180) = [protein]-peptidylproline (omega=0). Functionally, involved in protein export. Acts as a chaperone by maintaining the newly synthesized protein in an open conformation. Functions as a peptidyl-prolyl cis-trans isomerase. The sequence is that of Trigger factor from Anaeromyxobacter dehalogenans (strain 2CP-C).